The sequence spans 523 residues: Xanthotoxin 5-hydroxylase CYP82C2 (523 aa).

Residues 1-21 traverse the membrane as a helical segment; sequence MDTSLFSLFVPILVFVFIALF. Cys-462 serves as a coordination point for heme.

It belongs to the cytochrome P450 family. Heme serves as cofactor.

The protein resides in the membrane. The enzyme catalyses xanthotoxin + reduced [NADPH--hemoprotein reductase] + O2 = 5-hydroxyxanthotoxin + oxidized [NADPH--hemoprotein reductase] + H2O + 2 H(+). The catalysed reaction is indole-3-carbonyl nitrile + reduced [NADPH--hemoprotein reductase] + O2 = 4-hydroxy-indole-3-carbonyl nitrile + oxidized [NADPH--hemoprotein reductase] + H2O + H(+). Involved in the biosynthetic pathway to 4-hydroxyindole-3-carbonyl nitrile (4-OH-ICN), a cyanogenic metabolite required for inducible pathogen defense. Converts indole-3-carbonyl nitrile (ICN) into 4-OH-ICN. Can hydroxylate xanthotoxin (8-methoxypsoralen) to form 5-hydroxyxanthotoxin (5-hydroxy-8-methoxypsoralen) in vivo and in vitro. The polypeptide is Xanthotoxin 5-hydroxylase CYP82C2 (Arabidopsis thaliana (Mouse-ear cress)).